The chain runs to 304 residues: Acetaldehyde dehydrogenase 4 (304 aa).

Catalysis depends on cysteine 131, which acts as the Acyl-thioester intermediate. Residues 162-170 (SAGPGTRKN) and asparagine 273 each bind NAD(+).

This sequence belongs to the acetaldehyde dehydrogenase family. Heterotetramer composed of two BphI (aldolase) and two BphJ (dehydrogenase).

It catalyses the reaction acetaldehyde + NAD(+) + CoA = acetyl-CoA + NADH + H(+). The enzyme catalyses propanal + NAD(+) + CoA = propanoyl-CoA + NADH + H(+). The protein operates within xenobiotic degradation; polychlorinated biphenyl degradation. With respect to regulation, bound pyruvate or other intermediates in the aldol addition reaction catalyzed by BphI allosterically activates BphJ reductive deacylation activity. Functionally, catalyzes the conversion of acetaldehyde or propanal to acetyl-CoA or propanoyl-CoA, respectively, using NAD(+) and coenzyme A. Displays broad specificity since it can utilize aliphatic aldehydes from two to five carbons in length as substrates; the aldehyde substrates can be directly channeled from the aldolase BphI to the dehydrogenase BphJ. Is the final enzyme in the meta-cleavage pathway for the degradation of polychlorinated biphenyls (PCBs). Is also able to utilize NADP(+) instead of NAD(+). Is not active with succinic semialdehyde or picolinaldehyde as substrates. Can also catalyze the reverse reaction, i.e. the reductive deacylation of acetyl-CoA to acetaldehyde, which is then channeled to the BphI active site. The BphI-BphJ enzyme complex exhibits unique bidirectionality in substrate channeling and allosteric activation. The chain is Acetaldehyde dehydrogenase 4 (bphJ) from Paraburkholderia xenovorans (strain LB400).